The following is a 213-amino-acid chain: 3-isopropylmalate dehydratase small subunit (213 aa).

The protein belongs to the LeuD family. LeuD type 1 subfamily. As to quaternary structure, heterodimer of LeuC and LeuD.

It carries out the reaction (2R,3S)-3-isopropylmalate = (2S)-2-isopropylmalate. It participates in amino-acid biosynthesis; L-leucine biosynthesis; L-leucine from 3-methyl-2-oxobutanoate: step 2/4. In terms of biological role, catalyzes the isomerization between 2-isopropylmalate and 3-isopropylmalate, via the formation of 2-isopropylmaleate. This chain is 3-isopropylmalate dehydratase small subunit, found in Aromatoleum aromaticum (strain DSM 19018 / LMG 30748 / EbN1) (Azoarcus sp. (strain EbN1)).